Reading from the N-terminus, the 265-residue chain is Mlc titration factor A (265 aa).

Zn(2+) contacts are provided by histidine 111, histidine 148, histidine 152, and glutamate 211.

It belongs to the MtfA family. Interacts with Mlc. The cofactor is Zn(2+).

It is found in the cytoplasm. Functionally, involved in the modulation of the activity of the glucose-phosphotransferase system (glucose-PTS). Interacts with the transcriptional repressor Mlc, preventing its interaction with DNA and leading to the modulation of expression of genes regulated by Mlc, including ptsG, which encodes the PTS system glucose-specific EIICB component. In terms of biological role, shows zinc-dependent metallopeptidase activity. The protein is Mlc titration factor A of Escherichia coli O139:H28 (strain E24377A / ETEC).